The chain runs to 696 residues: DNA ligase (696 aa).

NAD(+)-binding positions include 41 to 45 (DGQYD), 90 to 91 (SL), and Glu120. The active-site N6-AMP-lysine intermediate is Lys122. The NAD(+) site is built by Arg143, Glu180, Lys296, and Lys320. Zn(2+) contacts are provided by Cys414, Cys417, Cys433, and Cys439. A BRCT domain is found at 603 to 692 (STPRTLEGLT…PDAVARPAEE (90 aa)).

It belongs to the NAD-dependent DNA ligase family. LigA subfamily. The cofactor is Mg(2+). Requires Mn(2+) as cofactor.

The enzyme catalyses NAD(+) + (deoxyribonucleotide)n-3'-hydroxyl + 5'-phospho-(deoxyribonucleotide)m = (deoxyribonucleotide)n+m + AMP + beta-nicotinamide D-nucleotide.. Its function is as follows. DNA ligase that catalyzes the formation of phosphodiester linkages between 5'-phosphoryl and 3'-hydroxyl groups in double-stranded DNA using NAD as a coenzyme and as the energy source for the reaction. It is essential for DNA replication and repair of damaged DNA. In Kineococcus radiotolerans (strain ATCC BAA-149 / DSM 14245 / SRS30216), this protein is DNA ligase.